The primary structure comprises 353 residues: UDP-3-O-acylglucosamine N-acyltransferase (353 aa).

H246 serves as the catalytic Proton acceptor.

It belongs to the transferase hexapeptide repeat family. LpxD subfamily. As to quaternary structure, homotrimer.

The enzyme catalyses a UDP-3-O-[(3R)-3-hydroxyacyl]-alpha-D-glucosamine + a (3R)-hydroxyacyl-[ACP] = a UDP-2-N,3-O-bis[(3R)-3-hydroxyacyl]-alpha-D-glucosamine + holo-[ACP] + H(+). Its pathway is bacterial outer membrane biogenesis; LPS lipid A biosynthesis. Its function is as follows. Catalyzes the N-acylation of UDP-3-O-acylglucosamine using 3-hydroxyacyl-ACP as the acyl donor. Is involved in the biosynthesis of lipid A, a phosphorylated glycolipid that anchors the lipopolysaccharide to the outer membrane of the cell. This chain is UDP-3-O-acylglucosamine N-acyltransferase, found in Chlorobaculum tepidum (strain ATCC 49652 / DSM 12025 / NBRC 103806 / TLS) (Chlorobium tepidum).